We begin with the raw amino-acid sequence, 362 residues long: Peptide chain release factor 1 (362 aa).

The residue at position 235 (glutamine 235) is an N5-methylglutamine.

The protein belongs to the prokaryotic/mitochondrial release factor family. Post-translationally, methylated by PrmC. Methylation increases the termination efficiency of RF1.

It is found in the cytoplasm. Peptide chain release factor 1 directs the termination of translation in response to the peptide chain termination codons UAG and UAA. This is Peptide chain release factor 1 from Variovorax paradoxus (strain S110).